An 885-amino-acid chain; its full sequence is Cadherin-related family member 3 (885 aa).

The N-terminal stretch at 1 to 19 is a signal peptide; the sequence is MQEAIILLALLGAMSGGEA. Over 20-713 the chain is Extracellular; the sequence is LHLILLPATG…VYSPSAWYVP (694 aa). 6 consecutive Cadherin domains span residues 23 to 132, 136 to 236, 237 to 344, 346 to 466, 462 to 566, and 567 to 695; these read ILLP…PPQF, LAEG…VPRF, TSPT…NPAT, QKFT…RPSY, DRPS…KPIC, and TPNS…RPRV. N-linked (GlcNAc...) asparagine glycans are attached at residues Asn186 and Asn257. The N-linked (GlcNAc...) asparagine glycan is linked to Asn624. A helical transmembrane segment spans residues 714–734; sequence FVITLGSILLLGLLVYLVVLL. Over 735–885 the chain is Cytoplasmic; it reads AKAIHRHCPC…RAYPKPHPGK (151 aa). Positions 808–885 are disordered; it reads MPKWKESSHQ…RAYPKPHPGK (78 aa).

In terms of assembly, (Microbial infection) Interacts (via N-terminus) with human rhinovirus C capsid proteins VP1, VP2 and VP3. Expressed in bronchial epithelium from adults and in fetal lung tissue.

The protein localises to the cell membrane. Cadherins are calcium-dependent cell adhesion proteins. They preferentially interact with themselves in a homophilic manner in connecting cells; cadherins may thus contribute to the sorting of heterogeneous cell types. Its function is as follows. (Microbial infection) Acts as a receptor for human rhinovirus C. This chain is Cadherin-related family member 3 (CDHR3), found in Homo sapiens (Human).